The following is a 183-amino-acid chain: Ras-related protein Rap-2a (183 aa).

10–17 provides a ligand contact to GTP; sequence GSGGVGKS. The Effector region signature appears at 32–40; the sequence is YDPTIEDFY. GTP-binding positions include 57–61 and 116–119; these read DTAGT and NKVD. Residues Cys176 and Cys177 are each lipidated (S-palmitoyl cysteine). Cys180 is modified (cysteine methyl ester). Cys180 carries S-farnesyl cysteine lipidation. The propeptide at 181–183 is removed in mature form; sequence VIL.

The protein belongs to the small GTPase superfamily. Ras family. In terms of assembly, interacts (GTP-bound form) with RUNDC3A. Interacts with PLCE1. Interacts with ARHGAP29, SGSM1, SGSM2 and SGSM3. Interacts (GTP-bound form preferentially) with TNIK (via the CNH domain); the interaction is direct and recruits RAP2A to the E3 ubiquitin ligase NEDD4. Interacts with MINK1. Interacts (GTP-bound form preferentially) with MAP4K4. Interacts with cytoskeletal actin. Interacts with RGS14; the interaction is GTP-dependent. Post-translationally, ubiquitinated; undergoes 'Lys-63' monoubiquitination and diubiquitination by NEDD4. Multiple lysine residues are probably modified. Ubiquitination requires TNIK, prevents interaction with effectors and inactivates RAP2A. Ubiquitination by the ECS(RAB40B) complex leads to RAP2A localization to lamellipodia plasma membrane, activation, and regulation of sorting at early endosomes for recycling to the lamellipodia plasma membrane. In terms of processing, palmitoylated. Palmitoylation is required for association with recycling endosome membranes and activation of TNIK.

Its subcellular location is the midbody. It localises to the cell projection. The protein resides in the lamellipodium membrane. The protein localises to the golgi apparatus. It is found in the recycling endosome membrane. Its subcellular location is the lysosome. It catalyses the reaction GTP + H2O = GDP + phosphate + H(+). With respect to regulation, activated by the guanine nucleotide-exchange factors RAPGEF3 and RAPGEF4 in a cAMP-dependent manner. Nucleotide exchange is also specifically stimulated by RAPGEF5, RASGEF1A and RASGEF1B. Functionally, small GTP-binding protein which cycles between a GDP-bound inactive and a GTP-bound active form. In its active form interacts with and regulates several effectors including MAP4K4, MINK1 and TNIK. Part of a signaling complex composed of NEDD4, RAP2A and TNIK which regulates neuronal dendrite extension and arborization during development. More generally, it is part of several signaling cascades and may regulate cytoskeletal rearrangements, cell migration, cell adhesion and cell spreading. The polypeptide is Ras-related protein Rap-2a (RAP2A) (Sus scrofa (Pig)).